Consider the following 210-residue polypeptide: Thiamine-phosphate synthase (210 aa).

4-amino-2-methyl-5-(diphosphooxymethyl)pyrimidine is bound by residues 39-43 (QLREK) and Asn71. Positions 72 and 91 each coordinate Mg(2+). Ser110 contacts 4-amino-2-methyl-5-(diphosphooxymethyl)pyrimidine. 136-138 (TST) lines the 2-[(2R,5Z)-2-carboxy-4-methylthiazol-5(2H)-ylidene]ethyl phosphate pocket. Lys139 contacts 4-amino-2-methyl-5-(diphosphooxymethyl)pyrimidine. 2-[(2R,5Z)-2-carboxy-4-methylthiazol-5(2H)-ylidene]ethyl phosphate contacts are provided by residues Gly166 and 186 to 187 (VS).

Belongs to the thiamine-phosphate synthase family. It depends on Mg(2+) as a cofactor.

The enzyme catalyses 2-[(2R,5Z)-2-carboxy-4-methylthiazol-5(2H)-ylidene]ethyl phosphate + 4-amino-2-methyl-5-(diphosphooxymethyl)pyrimidine + 2 H(+) = thiamine phosphate + CO2 + diphosphate. It catalyses the reaction 2-(2-carboxy-4-methylthiazol-5-yl)ethyl phosphate + 4-amino-2-methyl-5-(diphosphooxymethyl)pyrimidine + 2 H(+) = thiamine phosphate + CO2 + diphosphate. It carries out the reaction 4-methyl-5-(2-phosphooxyethyl)-thiazole + 4-amino-2-methyl-5-(diphosphooxymethyl)pyrimidine + H(+) = thiamine phosphate + diphosphate. It participates in cofactor biosynthesis; thiamine diphosphate biosynthesis; thiamine phosphate from 4-amino-2-methyl-5-diphosphomethylpyrimidine and 4-methyl-5-(2-phosphoethyl)-thiazole: step 1/1. Functionally, condenses 4-methyl-5-(beta-hydroxyethyl)thiazole monophosphate (THZ-P) and 2-methyl-4-amino-5-hydroxymethyl pyrimidine pyrophosphate (HMP-PP) to form thiamine monophosphate (TMP). This Ruminiclostridium cellulolyticum (strain ATCC 35319 / DSM 5812 / JCM 6584 / H10) (Clostridium cellulolyticum) protein is Thiamine-phosphate synthase.